Here is a 540-residue protein sequence, read N- to C-terminus: Serine/threonine-protein phosphatase ppzA (540 aa).

2 disordered regions span residues 1–108 (MGQS…KRGH) and 120–140 (VDHVSDVPPTGAAPTGPSTQK). 2 stretches are compositionally biased toward polar residues: residues 15–24 (SLQSYPSFSR) and 45–54 (SDSPRGSTAG). Over residues 62–88 (AASVKSTTSRRSSTNQSVQSPDDTPSQ) the composition is skewed to low complexity. Residues 89–98 (PDAPEPPPSP) show a composition bias toward pro residues. Over residues 127 to 136 (PPTGAAPTGP) the composition is skewed to low complexity. Residues Asp239, His241, Asp267, and Asn299 each coordinate Mn(2+). In terms of domain architecture, Phosphatase tensin-type spans 258–540 (PASNYLFLGD…SLVTSWGISR (283 aa)). The active-site Proton donor is His300. Mn(2+) contacts are provided by His348 and His423.

This sequence belongs to the PPP phosphatase family. PP-Z subfamily. Interacts with at least 54 proteins, of which 31 are detected only after iron starvation and 22 are detected only in control conditions. Only the regulatory subunit of the protein phosphatase PP1 (Afu1g04800/AFUB_005140) interacts with ppzA in both conditions. Mn(2+) serves as cofactor.

It is found in the cytoplasm. It carries out the reaction O-phospho-L-seryl-[protein] + H2O = L-seryl-[protein] + phosphate. It catalyses the reaction O-phospho-L-threonyl-[protein] + H2O = L-threonyl-[protein] + phosphate. Functionally, catalytic subunit of protein phosphatase Z (PPZ) involved in iron assimilation. Regulates secondary metabolites production, including gliotoxin, pyripyropene A, fumagillin, fumiquinazoline A, triacetyl-fusarinine C, and helvolic acid. Plays a key role in pathogenicity. This Aspergillus fumigatus (strain CBS 144.89 / FGSC A1163 / CEA10) (Neosartorya fumigata) protein is Serine/threonine-protein phosphatase ppzA.